A 233-amino-acid polypeptide reads, in one-letter code: Ribonuclease 3 (233 aa).

In terms of domain architecture, RNase III spans 4 to 126 (LNKLMERLGH…IVGAIYIDAG (123 aa)). E39 contacts Mg(2+). The active site involves D43. 2 residues coordinate Mg(2+): D112 and E115. Residue E115 is part of the active site. In terms of domain architecture, DRBM spans 153 to 222 (DAKSLLQEWL…AKRFLELLDD (70 aa)).

Belongs to the ribonuclease III family. In terms of assembly, homodimer. The cofactor is Mg(2+).

The protein resides in the cytoplasm. The catalysed reaction is Endonucleolytic cleavage to 5'-phosphomonoester.. Its function is as follows. Digests double-stranded RNA. Involved in the processing of primary rRNA transcript to yield the immediate precursors to the large and small rRNAs (23S and 16S). Processes some mRNAs, and tRNAs when they are encoded in the rRNA operon. Processes pre-crRNA and tracrRNA of type II CRISPR loci if present in the organism. This Coxiella burnetii (strain CbuK_Q154) (Coxiella burnetii (strain Q154)) protein is Ribonuclease 3.